The primary structure comprises 1030 residues: uncharacterized protein (1030 aa).

Residues 1–15 show a composition bias toward polar residues; that stretch reads MSENSTDSKNFQFSE. Positions 1 to 53 are disordered; sequence MSENSTDSKNFQFSEGSRESSNDELKVLLRDTETKEDEKSSFSNSEEESIIEN. Residues 16-40 show a composition bias toward basic and acidic residues; that stretch reads GSRESSNDELKVLLRDTETKEDEKS. The residue at position 41 (Ser41) is a Phosphoserine. Residues 134–290 enclose the Helicase ATP-binding domain; the sequence is IKCVERMESV…WISEIHKQPC (157 aa). ATP is bound at residue 147–154; the sequence is AHTSAGKT. A DEVH box motif is present at residues 238-241; sequence DEVH. The 205-residue stretch at 357-561 folds into the Helicase C-terminal domain; that stretch reads SLERIINMVL…GMILNLMRIE (205 aa).

This sequence belongs to the helicase family. SKI2 subfamily.

The protein localises to the nucleus. This is an uncharacterized protein from Schizosaccharomyces pombe (strain 972 / ATCC 24843) (Fission yeast).